The primary structure comprises 850 residues: RPA-related protein RADX (850 aa).

Residues 1-31 (MSGESGQPQPGPSHAGLYLEHPERDQAGVPG) are disordered. Positions 228–331 (WNSRKNFPAL…LISTMEICLN (104 aa)) form a DNA-binding region, OB. Disordered stretches follow at residues 575–612 (EAFW…MGSQ) and 632–671 (GPSA…GKSR). Residues 590–608 (GKEDHCHERGSKRSQDDRP) are compositionally biased toward basic and acidic residues. Polar residues predominate over residues 643 to 668 (PHSSAQMKGSKHNTPSQESSTAYTTG).

The protein resides in the chromosome. Its function is as follows. Single-stranded DNA-binding protein recruited to replication forks to maintain genome stability. Prevents fork collapse by antagonizing the accumulation of RAD51 at forks to ensure the proper balance of fork remodeling and protection without interfering with the capacity of cells to complete homologous recombination of double-strand breaks. This chain is RPA-related protein RADX, found in Mus musculus (Mouse).